We begin with the raw amino-acid sequence, 592 residues long: LIM domain-binding protein 1 (592 aa).

Disordered stretches follow at residues 14-41 (GHPP…NSQN) and 305-368 (PAPE…NPMT). The segment covering 23 to 41 (ESSNSHYGMPPSQGTNSQN) has biased composition (polar residues). Low complexity predominate over residues 322 to 344 (PAANPRGSKKATAAAAAAAAAAT). A compositionally biased stretch (polar residues) spans 352–368 (PTASPANNQQFPPNPMT). One can recognise an LIM interaction domain (LID) domain in the interval 378-417 (DVMVVGEPSMMGSEFGENDERTISRVENSQYDPNAMQMQS). Disordered regions lie at residues 437–458 (HHPG…MGSQ) and 559–592 (GGMQ…MITG). Residues 577-586 (GPPPQWPPPN) are compositionally biased toward pro residues.

It belongs to the LDB family. Interacts with blmp-1. In terms of tissue distribution, expressed in all neurons and some other tissues of the adult, including vulval muscle, and, in males, all the neurons of the tail region. Expressed in vulval cells.

Its function is as follows. Binds to the LIM domain of LIM domain-containing transcription factors. Required for the blmp-1-mediated transcriptional activation or repression of several hypodermal genes, such as bed-3. Regulates sam-10 nuclear localization in PLM neurons. Has a role in synaptic differentiation of PLM mechanosensory neurons. Involved in gonadogenesis. The polypeptide is LIM domain-binding protein 1 (Caenorhabditis elegans).